A 436-amino-acid polypeptide reads, in one-letter code: Mannitol-binding protein (436 aa).

The signal sequence occupies residues 1-22 (MNDSIKACLAAACLALPLLAQG).

The protein belongs to the bacterial solute-binding protein 1 family.

It is found in the periplasm. Binds mannitol with high affinity. In Pseudomonas aeruginosa (strain ATCC 15692 / DSM 22644 / CIP 104116 / JCM 14847 / LMG 12228 / 1C / PRS 101 / PAO1), this protein is Mannitol-binding protein.